A 194-amino-acid polypeptide reads, in one-letter code: Imidazoleglycerol-phosphate dehydratase (194 aa).

It belongs to the imidazoleglycerol-phosphate dehydratase family.

The protein resides in the cytoplasm. It catalyses the reaction D-erythro-1-(imidazol-4-yl)glycerol 3-phosphate = 3-(imidazol-4-yl)-2-oxopropyl phosphate + H2O. It participates in amino-acid biosynthesis; L-histidine biosynthesis; L-histidine from 5-phospho-alpha-D-ribose 1-diphosphate: step 6/9. The protein is Imidazoleglycerol-phosphate dehydratase of Bacillus cereus (strain AH187).